Consider the following 444-residue polypeptide: Protein translocase subunit SecY (444 aa).

10 consecutive transmembrane segments (helical) span residues 24–44 (FFVIGALLVFRAGSFVPIPGI), 77–97 (ILALGIMPYISASIVVQLLTV), 123–143 (GTLVLATFQAIGIATGLPNMV), 153–173 (MFTLIATVSLVTGTMFLMWLG), 181–201 (IGNGISILIFAGIVAGLPKAI), 215–235 (VLLLLLIAVLAFAVIYFVVFM), 269–289 (MAGVIPAIFASSIILFPGTLA), 318–338 (YVMLYAAAIIFFCFFYTALVF), 376–396 (LAGALYITFICLIPEFMMVAW), and 400–420 (FYFGGTSLLIVVVVIMDFMAQ).

The protein belongs to the SecY/SEC61-alpha family. As to quaternary structure, component of the Sec protein translocase complex. Heterotrimer consisting of SecY, SecE and SecG subunits. The heterotrimers can form oligomers, although 1 heterotrimer is thought to be able to translocate proteins. Interacts with the ribosome. Interacts with SecDF, and other proteins may be involved. Interacts with SecA.

Its subcellular location is the cell inner membrane. Its function is as follows. The central subunit of the protein translocation channel SecYEG. Consists of two halves formed by TMs 1-5 and 6-10. These two domains form a lateral gate at the front which open onto the bilayer between TMs 2 and 7, and are clamped together by SecE at the back. The channel is closed by both a pore ring composed of hydrophobic SecY resides and a short helix (helix 2A) on the extracellular side of the membrane which forms a plug. The plug probably moves laterally to allow the channel to open. The ring and the pore may move independently. This is Protein translocase subunit SecY from Vibrio cholerae serotype O1 (strain ATCC 39315 / El Tor Inaba N16961).